Consider the following 160-residue polypeptide: 3-hydroxyacyl-[acyl-carrier-protein] dehydratase FabZ (160 aa).

H60 is a catalytic residue.

The protein belongs to the thioester dehydratase family. FabZ subfamily.

Its subcellular location is the cytoplasm. The enzyme catalyses a (3R)-hydroxyacyl-[ACP] = a (2E)-enoyl-[ACP] + H2O. In terms of biological role, involved in unsaturated fatty acids biosynthesis. Catalyzes the dehydration of short chain beta-hydroxyacyl-ACPs and long chain saturated and unsaturated beta-hydroxyacyl-ACPs. The polypeptide is 3-hydroxyacyl-[acyl-carrier-protein] dehydratase FabZ (Rhodospirillum rubrum (strain ATCC 11170 / ATH 1.1.1 / DSM 467 / LMG 4362 / NCIMB 8255 / S1)).